The chain runs to 280 residues: Shikimate dehydrogenase (NADP(+)) (280 aa).

Residues 15 to 17 and threonine 62 each bind shikimate; that span reads SMS. The active-site Proton acceptor is lysine 66. Glutamate 78 is a binding site for NADP(+). Shikimate-binding residues include asparagine 87 and aspartate 102. Residues 127-131, 151-156, and isoleucine 219 contribute to the NADP(+) site; these read GAGGA and NRTLEK. Tyrosine 221 contacts shikimate. Residue glycine 242 participates in NADP(+) binding.

It belongs to the shikimate dehydrogenase family. In terms of assembly, homodimer.

The enzyme catalyses shikimate + NADP(+) = 3-dehydroshikimate + NADPH + H(+). It functions in the pathway metabolic intermediate biosynthesis; chorismate biosynthesis; chorismate from D-erythrose 4-phosphate and phosphoenolpyruvate: step 4/7. Its function is as follows. Involved in the biosynthesis of the chorismate, which leads to the biosynthesis of aromatic amino acids. Catalyzes the reversible NADPH linked reduction of 3-dehydroshikimate (DHSA) to yield shikimate (SA). This Bacillus subtilis (strain 168) protein is Shikimate dehydrogenase (NADP(+)).